A 476-amino-acid polypeptide reads, in one-letter code: Bifunctional protein HldE (476 aa).

The tract at residues 1–319 (MKITLPEYDK…ANAVYSQQEI (319 aa)) is ribokinase. Residue 196–199 (NLAE) participates in ATP binding. The active site involves aspartate 265. Positions 345-476 (MTNGCFDILH…EIIKTIRNNS (132 aa)) are cytidylyltransferase.

This sequence in the N-terminal section; belongs to the carbohydrate kinase PfkB family. It in the C-terminal section; belongs to the cytidylyltransferase family. As to quaternary structure, homodimer.

It catalyses the reaction D-glycero-beta-D-manno-heptose 7-phosphate + ATP = D-glycero-beta-D-manno-heptose 1,7-bisphosphate + ADP + H(+). It carries out the reaction D-glycero-beta-D-manno-heptose 1-phosphate + ATP + H(+) = ADP-D-glycero-beta-D-manno-heptose + diphosphate. The protein operates within nucleotide-sugar biosynthesis; ADP-L-glycero-beta-D-manno-heptose biosynthesis; ADP-L-glycero-beta-D-manno-heptose from D-glycero-beta-D-manno-heptose 7-phosphate: step 1/4. It participates in nucleotide-sugar biosynthesis; ADP-L-glycero-beta-D-manno-heptose biosynthesis; ADP-L-glycero-beta-D-manno-heptose from D-glycero-beta-D-manno-heptose 7-phosphate: step 3/4. Its function is as follows. Catalyzes the phosphorylation of D-glycero-D-manno-heptose 7-phosphate at the C-1 position to selectively form D-glycero-beta-D-manno-heptose-1,7-bisphosphate. In terms of biological role, catalyzes the ADP transfer from ATP to D-glycero-beta-D-manno-heptose 1-phosphate, yielding ADP-D-glycero-beta-D-manno-heptose. This is Bifunctional protein HldE from Psychromonas ingrahamii (strain DSM 17664 / CCUG 51855 / 37).